An 86-amino-acid polypeptide reads, in one-letter code: UPF0457 protein SSP0714 (86 aa).

Belongs to the UPF0457 family.

This Staphylococcus saprophyticus subsp. saprophyticus (strain ATCC 15305 / DSM 20229 / NCIMB 8711 / NCTC 7292 / S-41) protein is UPF0457 protein SSP0714.